We begin with the raw amino-acid sequence, 326 residues long: Protein C10 (326 aa).

It belongs to the poxviridae C4/C10 protein family.

This chain is Protein C10, found in Homo sapiens (Human).